Here is a 304-residue protein sequence, read N- to C-terminus: Virulence protein VirA (304 aa).

Could be involved in the biosynthesis of a major surface antigen important for virulence. The polypeptide is Virulence protein VirA (virA) (Vibrio anguillarum (strain ATCC 68554 / 775) (Listonella anguillarum)).